The primary structure comprises 329 residues: Ribosomal RNA small subunit methyltransferase C (329 aa).

The protein belongs to the methyltransferase superfamily. RsmC family. Monomer.

Its subcellular location is the cytoplasm. The catalysed reaction is guanosine(1207) in 16S rRNA + S-adenosyl-L-methionine = N(2)-methylguanosine(1207) in 16S rRNA + S-adenosyl-L-homocysteine + H(+). Functionally, specifically methylates the guanine in position 1207 of 16S rRNA in the 30S particle. The sequence is that of Ribosomal RNA small subunit methyltransferase C from Actinobacillus pleuropneumoniae serotype 7 (strain AP76).